We begin with the raw amino-acid sequence, 150 residues long: Soluble pyridine nucleotide transhydrogenase (150 aa).

The protein belongs to the class-I pyridine nucleotide-disulfide oxidoreductase family. Requires FAD as cofactor.

Its subcellular location is the cytoplasm. It carries out the reaction NAD(+) + NADPH = NADH + NADP(+). Conversion of NADPH, generated by peripheral catabolic pathways, to NADH, which can enter the respiratory chain for energy generation. The protein is Soluble pyridine nucleotide transhydrogenase (sthA) of Pectobacterium carotovorum subsp. carotovorum (Erwinia carotovora subsp. carotovora).